The chain runs to 348 residues: UDP-3-O-acylglucosamine N-acyltransferase (348 aa).

The active-site Proton acceptor is histidine 248.

It belongs to the transferase hexapeptide repeat family. LpxD subfamily. In terms of assembly, homotrimer.

The catalysed reaction is a UDP-3-O-[(3R)-3-hydroxyacyl]-alpha-D-glucosamine + a (3R)-hydroxyacyl-[ACP] = a UDP-2-N,3-O-bis[(3R)-3-hydroxyacyl]-alpha-D-glucosamine + holo-[ACP] + H(+). The protein operates within bacterial outer membrane biogenesis; LPS lipid A biosynthesis. Its function is as follows. Catalyzes the N-acylation of UDP-3-O-acylglucosamine using 3-hydroxyacyl-ACP as the acyl donor. Is involved in the biosynthesis of lipid A, a phosphorylated glycolipid that anchors the lipopolysaccharide to the outer membrane of the cell. The polypeptide is UDP-3-O-acylglucosamine N-acyltransferase (Rippkaea orientalis (strain PCC 8801 / RF-1) (Cyanothece sp. (strain PCC 8801))).